The sequence spans 409 residues: Elongation factor Tu (409 aa).

One can recognise a tr-type G domain in the interval Lys10–Glu214. Positions Gly19–Thr26 are G1. Gly19–Thr26 contributes to the GTP binding site. Thr26 is a Mg(2+) binding site. Residues Gly60–Asn64 form a G2 region. The tract at residues Asp81 to Gly84 is G3. GTP is bound by residues Asp81–His85 and Asn136–Asp139. The tract at residues Asn136–Asp139 is G4. The interval Ser174–Leu176 is G5.

In terms of assembly, monomer.

The protein resides in the cytoplasm. It catalyses the reaction GTP + H2O = GDP + phosphate + H(+). Functionally, GTP hydrolase that promotes the GTP-dependent binding of aminoacyl-tRNA to the A-site of ribosomes during protein biosynthesis. The protein is Elongation factor Tu of Nostoc sp. (strain PCC 7120 / SAG 25.82 / UTEX 2576).